Here is a 201-residue protein sequence, read N- to C-terminus: Two-component response regulator ORR10 (201 aa).

Residues 10-142 (HVLAVDDSLP…DMSKLKPHIL (133 aa)) form the Response regulatory domain. Aspartate 75 carries the 4-aspartylphosphate modification. Positions 149 to 201 (HYQQEQHLQSNSESNNSSNPTSENSSSSTSTNSHKRKAVDEEILPHTIRPRHS) are disordered. Residues 158-180 (SNSESNNSSNPTSENSSSSTSTN) show a composition bias toward low complexity.

This sequence belongs to the ARR family. Type-A subfamily. Post-translationally, two-component system major event consists of a His-to-Asp phosphorelay between a sensor histidine kinase (HK) and a response regulator (RR). In plants, the His-to-Asp phosphorelay involves an additional intermediate named Histidine-containing phosphotransfer protein (HPt). This multistep phosphorelay consists of a His-Asp-His-Asp sequential transfer of a phosphate group between first a His and an Asp of the HK protein, followed by the transfer to a conserved His of the HPt protein and finally the transfer to an Asp in the receiver domain of the RR protein. Expressed in mature leaves, and at low levels in roots, shoots and flowers.

In terms of biological role, functions as a response regulator involved in His-to-Asp phosphorelay signal transduction system. Phosphorylation of the Asp residue in the receiver domain activates the ability of the protein to promote the transcription of target genes. Type-A response regulators seem to act as negative regulators of the cytokinin signaling. This is Two-component response regulator ORR10 from Oryza sativa subsp. indica (Rice).